The sequence spans 396 residues: Acetate kinase (396 aa).

Residue N7 coordinates Mg(2+). K14 lines the ATP pocket. R88 contacts substrate. The Proton donor/acceptor role is filled by D145. ATP-binding positions include 205 to 209 (HLGNG), 279 to 281 (DFR), and 327 to 331 (GIGEN). E381 is a Mg(2+) binding site.

The protein belongs to the acetokinase family. As to quaternary structure, homodimer. Mg(2+) serves as cofactor. Requires Mn(2+) as cofactor.

The protein localises to the cytoplasm. The enzyme catalyses acetate + ATP = acetyl phosphate + ADP. The protein operates within metabolic intermediate biosynthesis; acetyl-CoA biosynthesis; acetyl-CoA from acetate: step 1/2. Catalyzes the formation of acetyl phosphate from acetate and ATP. Can also catalyze the reverse reaction. This is Acetate kinase from Campylobacter jejuni subsp. doylei (strain ATCC BAA-1458 / RM4099 / 269.97).